Reading from the N-terminus, the 290-residue chain is Aquaporin-3 (290 aa).

Residues 1-24 lie on the Cytoplasmic side of the membrane; it reads MGRQKELVTRCGEMLHIRYRLLRQ. The helical transmembrane segment at 25 to 42 threads the bilayer; the sequence is ALAECLGTLILVMFGCGS. The Extracellular portion of the chain corresponds to 43-56; it reads VAQVVLSRGTHGGF. A helical transmembrane segment spans residues 57 to 74; that stretch reads LTINLAFGFAVTLGILVA. Residues 75–78 lie on the Cytoplasmic side of the membrane; that stretch reads GQVS. The discontinuously helical intramembrane region spans 79–92; that stretch reads GAHLNPAVTFAMCF. The short motif at 83-85 is the NPA 1 element; that stretch reads NPA. Over 93–100 the chain is Cytoplasmic; it reads LAREPWIK. The chain crosses the membrane as a helical span at residues 101–121; it reads LPVYTLAQTLGAFLGAGIIFG. The Extracellular portion of the chain corresponds to 122–159; that stretch reads LYYDAIWAFANNQLIVSGPNGTAGIFATYPSGHLDMVN. The N-linked (GlcNAc...) asparagine glycan is linked to Asn-141. Residues 160 to 177 traverse the membrane as a helical segment; that stretch reads GFFDQFIGTASLIVCVLA. The Cytoplasmic portion of the chain corresponds to 178–189; that stretch reads IVDPNNNPVPRG. A helical transmembrane segment spans residues 190–206; that stretch reads LEAFTVGLVVLVIGTSM. The Extracellular segment spans residues 207–210; that stretch reads GFNS. Residues 211-224 constitute an intramembrane region (discontinuously helical); that stretch reads GYAVNPARDFGPRL. The NPA 2 motif lies at 215 to 217; that stretch reads NPA. Over 225–242 the chain is Extracellular; it reads FTAIAGWGSEVFTTGRHW. A helical membrane pass occupies residues 243–264; it reads WWVPIASPLLGSIAGVFVYQLM. Over 265–290 the chain is Cytoplasmic; that stretch reads IGCHLEPPPPSTDEENVKLSQVKHKE.

The protein belongs to the MIP/aquaporin (TC 1.A.8) family. As to quaternary structure, homotetramer; each monomer provides an independent glycerol/water pore. Could also exist in other oligomeric states. Highly expressed in stomach and spleen, with lower expression in kidney and lung.

The protein resides in the cell membrane. Its subcellular location is the basolateral cell membrane. The catalysed reaction is glycerol(in) = glycerol(out). It carries out the reaction H2O(in) = H2O(out). The enzyme catalyses urea(in) = urea(out). It catalyses the reaction H2O2(out) = H2O2(in). In terms of biological role, aquaglyceroporins form homotetrameric transmembrane channels, with each monomer independently mediating glycerol and water transport across the plasma membrane along their osmotic gradient. Could also be permeable to urea. Also participates in cell permeability to H2O2 and H2O2-mediated signaling. In skin, transports glycerol to the epidermis and stratum corneum, where it maintains hydration, elasticity, and supports lipid biosynthesis for barrier repair. In kidney, contributes to the reabsorption of water, helping the body maintain proper fluid balance. The protein is Aquaporin-3 of Sus scrofa (Pig).